Reading from the N-terminus, the 496-residue chain is Probable cytosol aminopeptidase (496 aa).

2 residues coordinate Mn(2+): lysine 258 and aspartate 263. The active site involves lysine 270. Residues aspartate 281, aspartate 340, and glutamate 342 each contribute to the Mn(2+) site. The active site involves arginine 344.

Belongs to the peptidase M17 family. Mn(2+) is required as a cofactor.

It localises to the cytoplasm. The catalysed reaction is Release of an N-terminal amino acid, Xaa-|-Yaa-, in which Xaa is preferably Leu, but may be other amino acids including Pro although not Arg or Lys, and Yaa may be Pro. Amino acid amides and methyl esters are also readily hydrolyzed, but rates on arylamides are exceedingly low.. The enzyme catalyses Release of an N-terminal amino acid, preferentially leucine, but not glutamic or aspartic acids.. Its function is as follows. Presumably involved in the processing and regular turnover of intracellular proteins. Catalyzes the removal of unsubstituted N-terminal amino acids from various peptides. The polypeptide is Probable cytosol aminopeptidase (Helicobacter pylori (strain HPAG1)).